We begin with the raw amino-acid sequence, 534 residues long: uncharacterized protein (534 aa).

The next 5 helical transmembrane spans lie at 4 to 22, 24 to 46, 56 to 75, 82 to 104, and 134 to 156; these read ILVL…RVSF, GISL…GWTI, ALFV…RGLA, AITG…RLLG, and PAAV…VLFV. Residues 167-187 are disordered; that stretch reads GDSDGTDSASETSGQSSAEIA. A compositionally biased stretch (polar residues) spans 172–187; that stretch reads TDSASETSGQSSAEIA. 2 consecutive RCK C-terminal domains span residues 180-264 and 265-349; these read GQSS…TLGE and LQDT…AVGH. A run of 6 helical transmembrane segments spans residues 359–378, 382–401, 408–430, 445–467, 479–501, and 511–533; these read LLSL…LSLQ, FSMS…ILGH, IRGS…LFLA, MERG…LVGF, WQSL…LTGA, and YVAA…VELI.

The protein belongs to the AAE transporter (TC 2.A.81) family.

It localises to the cell membrane. This is an uncharacterized protein from Rhodopirellula baltica (strain DSM 10527 / NCIMB 13988 / SH1).